Consider the following 690-residue polypeptide: Xylosyl- and glucuronyltransferase LARGE2 (690 aa).

Over 1–7 (MLPRGRP) the chain is Cytoplasmic. A helical; Signal-anchor for type II membrane protein transmembrane segment spans residues 8–28 (RALGAALLLLLLLVVGFFLFG). The Lumenal portion of the chain corresponds to 29–690 (RDPEYGLGTT…TALQQSRSRA (662 aa)). Residues N50 and N77 are each glycosylated (N-linked (GlcNAc...) asparagine). Positions 67-342 (LHVAIVCAGY…FLGFDGKLLC (276 aa)) are xylosyltransferase activity. Mn(2+)-binding residues include D171 and D173. Residue N201 is glycosylated (N-linked (GlcNAc...) asparagine). A glucuronyltransferase activity region spans residues 343-686 (RELFGCPNQF…LKYLTALQQS (344 aa)). Mn(2+) contacts are provided by D491 and D493.

The protein in the C-terminal section; belongs to the glycosyltransferase 49 family. It in the N-terminal section; belongs to the glycosyltransferase 8 family. As to quaternary structure, interacts with B4GAT1. Mn(2+) is required as a cofactor.

Its subcellular location is the golgi apparatus membrane. It carries out the reaction 3-O-[beta-D-GlcA-(1-&gt;3)-beta-D-Xyl-(1-&gt;4)-Rib-ol-P-Rib-ol-P-3-beta-D-GalNAc-(1-&gt;3)-beta-D-GlcNAc-(1-&gt;4)-(O-6-P-alpha-D-Man)]-Thr-[protein] + UDP-alpha-D-xylose = 3-O-[alpha-D-Xyl-(1-&gt;3)-beta-D-GlcA-(1-&gt;4)-beta-D-Xyl-(1-&gt;4)-Rib-ol-P-Rib-ol-P-3-beta-D-GalNAc-(1-&gt;3)-beta-D-GlcNAc-(1-&gt;4)-(O-6-P-alpha-D-Man)]-Thr-[protein] + UDP + H(+). It catalyses the reaction 3-O-{(1-&gt;[3)-alpha-D-Xyl-(1-&gt;3)-beta-D-GlcA-(1-&gt;](n)-4)-beta-D-Xyl-(1-&gt;4)-Rib-ol-P-Rib-ol-P-3-beta-D-GalNAc-(1-&gt;3)-beta-D-GlcNAc-(1-&gt;4)-O-6-P-alpha-D-Man}-L-Thr-[protein] + UDP-alpha-D-glucuronate = 3-O-{beta-D-GlcA-(1-&gt;[3)-alpha-D-Xyl-(1-&gt;3)-beta-D-GlcA-(1-&gt;](n)-4)-beta-D-Xyl-(1-&gt;4)-Rib-ol-P-Rib-ol-P-3-beta-D-GalNAc-(1-&gt;3)-beta-D-GlcNAc-(1-&gt;4)-O-6-P-alpha-D-Man}-L-Thr-[protein] + UDP + H(+). The catalysed reaction is 3-O-{beta-D-GlcA-(1-&gt;[3)-alpha-D-Xyl-(1-&gt;3)-beta-D-GlcA-(1-&gt;](n)-4)-beta-D-Xyl-(1-&gt;4)-Rib-ol-P-Rib-ol-P-3-beta-D-GalNAc-(1-&gt;3)-beta-D-GlcNAc-(1-&gt;4)-O-6-P-alpha-D-Man}-L-Thr-[protein] + UDP-alpha-D-xylose = 3-O-{(1-&gt;[3)-alpha-D-Xyl-(1-&gt;3)-beta-D-GlcA-(1-&gt;](n+1)-4)-beta-D-Xyl-(1-&gt;4)-Rib-ol-P-Rib-ol-P-3-beta-D-GalNAc-(1-&gt;3)-beta-D-GlcNAc-(1-&gt;4)-O-6-P-alpha-D-Man}-L-Thr-[protein] + UDP + H(+). It participates in protein modification; protein glycosylation. Functionally, bifunctional glycosyltransferase with both alpha-1,3-xylosyltransferase and beta-1,3-glucuronyltransferase activities involved in the maturation of alpha-dystroglycan (DAG1) by glycosylation leading to DAG1 binding to laminin G-like domain-containing extracellular proteins with high affinity and in a phosphorylated-O-mannosyl trisaccharide dependent manner. Elongates the glucuronyl-beta-1,4-xylose-beta disaccharide primer structure by adding repeating units [-3-Xylose-alpha-1,3-GlcA-beta-1-] to produce a heteropolysaccharide. Supports the maturation of DAG1 more effectively than LARGE1. In addition, can modify both heparan sulfate (HS)- and chondroitin/dermatan sulfate (CS/DS)-proteoglycans (PGs), namely GPC4, with a glycosaminoglycan (GAG)-like polysaccharide composed of xylose and glucuronic acid to confer laminin binding. This Rattus norvegicus (Rat) protein is Xylosyl- and glucuronyltransferase LARGE2.